The primary structure comprises 247 residues: MNAVILIPARLDSSRLPKKMLADLDGEPLIVRTWRQALLSNHAVRVVVATDSPEIAGALEAYGAEVMMTSPHARCGTERIAEAARSIDADVFLNLQGDEPLIDPRNIDLCLEPFLADNPPDCSTLVYPLLPEDFQQIDDPNVVKVVLDRNGNALYFSRSPVPFQREVYAATQFYRHIGLYAFSAEVLQHYASLPPSMLEKAESLEQLRLLENGFSIRCVTTTVDHPGVNTPEDLDLVRRMLRRSAGR.

This sequence belongs to the KdsB family.

The protein localises to the cytoplasm. The catalysed reaction is 3-deoxy-alpha-D-manno-oct-2-ulosonate + CTP = CMP-3-deoxy-beta-D-manno-octulosonate + diphosphate. It participates in nucleotide-sugar biosynthesis; CMP-3-deoxy-D-manno-octulosonate biosynthesis; CMP-3-deoxy-D-manno-octulosonate from 3-deoxy-D-manno-octulosonate and CTP: step 1/1. The protein operates within bacterial outer membrane biogenesis; lipopolysaccharide biosynthesis. Activates KDO (a required 8-carbon sugar) for incorporation into bacterial lipopolysaccharide in Gram-negative bacteria. The polypeptide is 3-deoxy-manno-octulosonate cytidylyltransferase (Chlorobium limicola (strain DSM 245 / NBRC 103803 / 6330)).